The chain runs to 109 residues: Polyprenyl transferase subC (109 aa).

The next 2 membrane-spanning stretches (helical) occupy residues 39 to 59 and 84 to 104; these read LFCVLAAYLFCGAGMVWNDWI and QAFVWMALQVIASCAVLHVML.

The protein belongs to the UbiA prenyltransferase family. The cofactor is Mg(2+).

It localises to the membrane. The protein operates within secondary metabolite biosynthesis; terpenoid biosynthesis. Functionally, polyprenyl transferase; part of the gene cluster that mediates the biosynthesis of the immunosuppressants subglutinols, meroterpenoids consisting of an alpha-pyrone (4-hydroxy-5,6-dimethyl-2-pyrone) moiety attached to a decalin core fused to a five-membered cyclic ether carrying a prenylside chain. The first step of the pathway is the synthesis of the alpha-pyrone moiety by the polyketide synthase subA via condensation of one acetyl-CoA starter unit with 3 malonyl-CoA units and 2 methylations. The alpha-pyrone is then combined with geranylgeranyl pyrophosphate (GGPP) formed by the GGPP synthase subD through the action of the prenyltransferase subC to yield a linear alpha-pyrone diterpenoid. Subsequent steps in the subglutinol biosynthetic pathway involve the decalin core formation, which is thought to be initiated by the epoxidation of the C10-C11 olefin by the FAD-dependent oxidoreductase subE. The following cyclization cascade would be catalyzed by the terpene cyclase subB. Lastly, the FAD-dependent dehydrogenase subF probably catalyzes the five-membered cyclic ether formation to complete the formation of subglutinol A. Subsequent redox reactions appear to give rise to subglutinol C and D, however, it remains unclear which enzymes are responsible for these transformations. SubD may have secondary function in the conversion of the identified subglutinols to subglutinol analog 45, which seems to be the major product of the cluster. The chain is Polyprenyl transferase subC from Metarhizium robertsii (strain ARSEF 23 / ATCC MYA-3075) (Metarhizium anisopliae (strain ARSEF 23)).